Reading from the N-terminus, the 579-residue chain is Chromosomal replication initiator protein DnaA (579 aa).

The interval 1 to 71 (MQDFWQAAAA…TALACEYWET (71 aa)) is domain I, interacts with DnaA modulators. The segment at 71-242 (TQVSVHFVLD…QQSDTVHERS (172 aa)) is domain II. Disordered stretches follow at residues 131 to 196 (AGAQ…SAAH) and 212 to 240 (EASARSYRVPSPQPAAPAGAQQQSDTVHE). A compositionally biased stretch (low complexity) spans 171–183 (SQSQQSAQGRGAA). The tract at residues 243 to 459 (RLNPILTFDN…GALRKILAFS (217 aa)) is domain III, AAA+ region. ATP-binding residues include Gly287, Gly289, Lys290, and Thr291. Positions 460–579 (NFHGKDITID…LHVLEQTLKG (120 aa)) are domain IV, binds dsDNA.

Belongs to the DnaA family. As to quaternary structure, oligomerizes as a right-handed, spiral filament on DNA at oriC.

The protein localises to the cytoplasm. Functionally, plays an essential role in the initiation and regulation of chromosomal replication. ATP-DnaA binds to the origin of replication (oriC) to initiate formation of the DNA replication initiation complex once per cell cycle. Binds the DnaA box (a 9 base pair repeat at the origin) and separates the double-stranded (ds)DNA. Forms a right-handed helical filament on oriC DNA; dsDNA binds to the exterior of the filament while single-stranded (ss)DNA is stabiized in the filament's interior. The ATP-DnaA-oriC complex binds and stabilizes one strand of the AT-rich DNA unwinding element (DUE), permitting loading of DNA polymerase. After initiation quickly degrades to an ADP-DnaA complex that is not apt for DNA replication. Binds acidic phospholipids. This is Chromosomal replication initiator protein DnaA from Cupriavidus metallidurans (strain ATCC 43123 / DSM 2839 / NBRC 102507 / CH34) (Ralstonia metallidurans).